The chain runs to 461 residues: Photosystem II CP43 reaction center protein (461 aa).

A propeptide spanning residues 1-2 (ME) is cleaved from the precursor. At threonine 3 the chain carries N-acetylthreonine. Position 3 is a phosphothreonine (threonine 3). The next 5 helical transmembrane spans lie at 57–81 (LFEV…PHLA), 122–143 (LLGP…KDRN), 166–188 (KASY…RKIT), 243–263 (KPFA…LSYS), and 279–300 (WFNN…ASQA). Residue glutamate 355 participates in [CaMn4O5] cluster binding. A helical transmembrane segment spans residues 435 to 459 (RARAAAAGFEKGIDRDFEPVLSMTP).

It belongs to the PsbB/PsbC family. PsbC subfamily. In terms of assembly, PSII is composed of 1 copy each of membrane proteins PsbA, PsbB, PsbC, PsbD, PsbE, PsbF, PsbH, PsbI, PsbJ, PsbK, PsbL, PsbM, PsbT, PsbX, PsbY, PsbZ, Psb30/Ycf12, at least 3 peripheral proteins of the oxygen-evolving complex and a large number of cofactors. It forms dimeric complexes. The cofactor is Binds multiple chlorophylls and provides some of the ligands for the Ca-4Mn-5O cluster of the oxygen-evolving complex. It may also provide a ligand for a Cl- that is required for oxygen evolution. PSII binds additional chlorophylls, carotenoids and specific lipids..

It localises to the plastid. The protein resides in the chloroplast thylakoid membrane. Its function is as follows. One of the components of the core complex of photosystem II (PSII). It binds chlorophyll and helps catalyze the primary light-induced photochemical processes of PSII. PSII is a light-driven water:plastoquinone oxidoreductase, using light energy to abstract electrons from H(2)O, generating O(2) and a proton gradient subsequently used for ATP formation. The polypeptide is Photosystem II CP43 reaction center protein (Lotus japonicus (Lotus corniculatus var. japonicus)).